Consider the following 115-residue polypeptide: Regulator of ribonuclease activity B (115 aa).

It belongs to the RraB family. In terms of assembly, interacts with the C-terminal region of Rne.

The protein localises to the cytoplasm. Its function is as follows. Globally modulates RNA abundance by binding to RNase E (Rne) and regulating its endonucleolytic activity. Can modulate Rne action in a substrate-dependent manner by altering the composition of the degradosome. The polypeptide is Regulator of ribonuclease activity B (Aeromonas hydrophila subsp. hydrophila (strain ATCC 7966 / DSM 30187 / BCRC 13018 / CCUG 14551 / JCM 1027 / KCTC 2358 / NCIMB 9240 / NCTC 8049)).